The primary structure comprises 406 residues: Coenzyme A biosynthesis bifunctional protein CoaBC (406 aa).

Residues 1 to 191 (MLNNRNVLLC…ETSAPLEGKH (191 aa)) form a phosphopantothenoylcysteine decarboxylase region. Cys157 functions as the Proton donor in the catalytic mechanism. Positions 192–406 (VVITAGPTRE…ALSKQTGERS (215 aa)) are phosphopantothenate--cysteine ligase. Residues Asp281, Lys291, Phe325, Lys339, and Lys343 each coordinate CTP.

The protein in the N-terminal section; belongs to the HFCD (homo-oligomeric flavin containing Cys decarboxylase) superfamily. It in the C-terminal section; belongs to the PPC synthetase family. Requires Mg(2+) as cofactor. FMN serves as cofactor.

It catalyses the reaction N-[(R)-4-phosphopantothenoyl]-L-cysteine + H(+) = (R)-4'-phosphopantetheine + CO2. It carries out the reaction (R)-4'-phosphopantothenate + L-cysteine + CTP = N-[(R)-4-phosphopantothenoyl]-L-cysteine + CMP + diphosphate + H(+). The protein operates within cofactor biosynthesis; coenzyme A biosynthesis; CoA from (R)-pantothenate: step 2/5. It participates in cofactor biosynthesis; coenzyme A biosynthesis; CoA from (R)-pantothenate: step 3/5. Functionally, catalyzes two sequential steps in the biosynthesis of coenzyme A. In the first step cysteine is conjugated to 4'-phosphopantothenate to form 4-phosphopantothenoylcysteine. In the second step the latter compound is decarboxylated to form 4'-phosphopantotheine. The sequence is that of Coenzyme A biosynthesis bifunctional protein CoaBC from Bacillus subtilis (strain 168).